The chain runs to 534 residues: Zinc finger protein 397 (534 aa).

Ser-31 bears the Phosphoserine mark. Residues 50-132 enclose the SCAN box domain; it reads RQQFRKFCYQ…TLLEDLEREF (83 aa). Residues Lys-55, Lys-171, Lys-202, and Lys-252 each participate in a glycyl lysine isopeptide (Lys-Gly) (interchain with G-Cter in SUMO2) cross-link. The interval 197–242 is disordered; sequence DISGEKSQRLSQEPSFGGFSEHKSSLEWQQGSAPGETLRRSPSQRA. 9 consecutive C2H2-type zinc fingers follow at residues 285 to 307, 313 to 335, 341 to 363, 369 to 391, 397 to 419, 425 to 447, 453 to 475, 481 to 503, and 509 to 531; these read YRCD…QRIH, YKCN…QRIH, YECS…RKIH, CKCN…QRIH, YECN…QRIH, YQCN…QRIH, and YICS…QRVH.

Belongs to the krueppel C2H2-type zinc-finger protein family.

It localises to the nucleus. In terms of biological role, DNA-dependent transcriptional repressor. This is Zinc finger protein 397 (ZNF397) from Bos taurus (Bovine).